The primary structure comprises 81 residues: Small ribosomal subunit protein bS20 (81 aa).

The protein belongs to the bacterial ribosomal protein bS20 family.

In terms of biological role, binds directly to 16S ribosomal RNA. This is Small ribosomal subunit protein bS20 from Mycoplasma capricolum subsp. capricolum (strain California kid / ATCC 27343 / NCTC 10154).